A 354-amino-acid polypeptide reads, in one-letter code: MNDSAHIDYARYDHIRPLLWTGDALELLDQRKLPFVVEHVRCDSSDAVAEAIHSLAVRGAPAIGIAAGWGVVLAAREIAADSGSEALQKLEPALLRLNAARPTAVNLAWALMRMRRVLAAAGPDWRDVLAREAQAIADEDLAANRHMGALGAGLIAPGSGVLTHCNTGSLATAGFGTALGVIRAGMAQQRISKVFAGETRPWLQGARLTVWELQQDGIDATLIADSAASHLMKSGLVQWVIVGADRICANGDTANKIGSYQLAIAARHHGVKFMVVAPSSTVDMATADGDQIEIEQRDPGELFGVGGVRTVADGIHAWNPVFDVTPGHLIDAIVTERGVIAQPDLARMQAAFGN.

Residues R58–A60, R101, and Q204 each bind substrate. The Proton donor role is filled by D245. N255–K256 is a substrate binding site.

This sequence belongs to the eIF-2B alpha/beta/delta subunits family. MtnA subfamily.

It catalyses the reaction 5-(methylsulfanyl)-alpha-D-ribose 1-phosphate = 5-(methylsulfanyl)-D-ribulose 1-phosphate. It functions in the pathway amino-acid biosynthesis; L-methionine biosynthesis via salvage pathway; L-methionine from S-methyl-5-thio-alpha-D-ribose 1-phosphate: step 1/6. Functionally, catalyzes the interconversion of methylthioribose-1-phosphate (MTR-1-P) into methylthioribulose-1-phosphate (MTRu-1-P). The sequence is that of Methylthioribose-1-phosphate isomerase from Xanthomonas campestris pv. campestris (strain ATCC 33913 / DSM 3586 / NCPPB 528 / LMG 568 / P 25).